The sequence spans 115 residues: NADH-ubiquinone oxidoreductase chain 3 (115 aa).

The next 3 helical transmembrane spans lie at Leu-3 to Trp-23, Phe-55 to Leu-75, and Leu-84 to Tyr-104.

Belongs to the complex I subunit 3 family. Core subunit of respiratory chain NADH dehydrogenase (Complex I) which is composed of 45 different subunits. Interacts with TMEM186. Interacts with TMEM242.

It is found in the mitochondrion inner membrane. It carries out the reaction a ubiquinone + NADH + 5 H(+)(in) = a ubiquinol + NAD(+) + 4 H(+)(out). Functionally, core subunit of the mitochondrial membrane respiratory chain NADH dehydrogenase (Complex I) which catalyzes electron transfer from NADH through the respiratory chain, using ubiquinone as an electron acceptor. Essential for the catalytic activity of complex I. The sequence is that of NADH-ubiquinone oxidoreductase chain 3 from Papio hamadryas (Hamadryas baboon).